An 887-amino-acid polypeptide reads, in one-letter code: Alanine--tRNA ligase (887 aa).

Zn(2+) contacts are provided by histidine 573, histidine 577, cysteine 676, and histidine 680.

This sequence belongs to the class-II aminoacyl-tRNA synthetase family. It depends on Zn(2+) as a cofactor.

The protein localises to the cytoplasm. It catalyses the reaction tRNA(Ala) + L-alanine + ATP = L-alanyl-tRNA(Ala) + AMP + diphosphate. Functionally, catalyzes the attachment of alanine to tRNA(Ala) in a two-step reaction: alanine is first activated by ATP to form Ala-AMP and then transferred to the acceptor end of tRNA(Ala). Also edits incorrectly charged Ser-tRNA(Ala) and Gly-tRNA(Ala) via its editing domain. The protein is Alanine--tRNA ligase of Corynebacterium jeikeium (strain K411).